The chain runs to 234 residues: Small ribosomal subunit protein uS3 (234 aa).

Residues 39–108 (IRKFVKKKLF…TVIVNVVEVK (70 aa)) enclose the KH type-2 domain. Residues 212-234 (KGKNEETNNETADNSRGRRREAK) form a disordered region.

This sequence belongs to the universal ribosomal protein uS3 family. Part of the 30S ribosomal subunit. Forms a tight complex with proteins S10 and S14.

Its function is as follows. Binds the lower part of the 30S subunit head. Binds mRNA in the 70S ribosome, positioning it for translation. The polypeptide is Small ribosomal subunit protein uS3 (Alkaliphilus metalliredigens (strain QYMF)).